Here is a 109-residue protein sequence, read N- to C-terminus: Ribulose bisphosphate carboxylase small subunit (109 aa).

This sequence belongs to the RuBisCO small chain family. As to quaternary structure, heterohexadecamer of 8 large and 8 small subunits. Forms complexes of many stoichiometries with Raf1 and RbcL.

The protein resides in the carboxysome. RuBisCO catalyzes two reactions: the carboxylation of D-ribulose 1,5-bisphosphate, the primary event in carbon dioxide fixation, as well as the oxidative fragmentation of the pentose substrate in the photorespiration process. Both reactions occur simultaneously and in competition at the same active site. Although the small subunit is not catalytic it is essential for maximal activity. In Nostoc sp. (strain PCC 7120 / SAG 25.82 / UTEX 2576), this protein is Ribulose bisphosphate carboxylase small subunit.